The following is a 283-amino-acid chain: Elongation factor Ts (283 aa).

Residues 80-83 (TDFV) form an involved in Mg(2+) ion dislocation from EF-Tu region.

This sequence belongs to the EF-Ts family.

The protein localises to the cytoplasm. In terms of biological role, associates with the EF-Tu.GDP complex and induces the exchange of GDP to GTP. It remains bound to the aminoacyl-tRNA.EF-Tu.GTP complex up to the GTP hydrolysis stage on the ribosome. The chain is Elongation factor Ts from Haemophilus influenzae (strain PittEE).